Consider the following 247-residue polypeptide: ATP synthase subunit a, chloroplastic (247 aa).

Helical transmembrane passes span 28-48 (GQVL…CLLG), 95-115 (VPFL…GALI), 134-154 (INTT…AGIS), 199-219 (LVVG…IMLL), and 220-240 (GLFT…AYIG).

It belongs to the ATPase A chain family. As to quaternary structure, F-type ATPases have 2 components, CF(1) - the catalytic core - and CF(0) - the membrane proton channel. CF(1) has five subunits: alpha(3), beta(3), gamma(1), delta(1), epsilon(1). CF(0) has four main subunits: a, b, b' and c.

It localises to the plastid. The protein resides in the chloroplast thylakoid membrane. Its function is as follows. Key component of the proton channel; it plays a direct role in the translocation of protons across the membrane. The polypeptide is ATP synthase subunit a, chloroplastic (Chlorella vulgaris (Green alga)).